A 445-amino-acid polypeptide reads, in one-letter code: Glutamate--tRNA ligase 2 (445 aa).

Residues 10–20 carry the 'HIGH' region motif; sequence PSPTGMLHVGN. A 'KMSKS' region motif is present at residues 240-244; that stretch reads KISKR. Residue K243 participates in ATP binding.

This sequence belongs to the class-I aminoacyl-tRNA synthetase family. Glutamate--tRNA ligase type 1 subfamily. Monomer.

The protein resides in the cytoplasm. It catalyses the reaction tRNA(Glu) + L-glutamate + ATP = L-glutamyl-tRNA(Glu) + AMP + diphosphate. Its function is as follows. Catalyzes the attachment of glutamate to tRNA(Glu) in a two-step reaction: glutamate is first activated by ATP to form Glu-AMP and then transferred to the acceptor end of tRNA(Glu). This Rickettsia canadensis (strain McKiel) protein is Glutamate--tRNA ligase 2.